Consider the following 93-residue polypeptide: Small integral membrane protein 41 (93 aa).

The chain crosses the membrane as a helical span at residues 38–58; the sequence is VVLGVLSLLVLCGVLFLGGGL. Over residues 71–80 the composition is skewed to basic and acidic residues; it reads REQRASREPE. The segment at 71 to 93 is disordered; sequence REQRASREPEPGSASGEDGDDDS.

It localises to the membrane. This Homo sapiens (Human) protein is Small integral membrane protein 41.